The following is a 189-amino-acid chain: Elongation factor P (189 aa).

This sequence belongs to the elongation factor P family.

It is found in the cytoplasm. The protein operates within protein biosynthesis; polypeptide chain elongation. Involved in peptide bond synthesis. Stimulates efficient translation and peptide-bond synthesis on native or reconstituted 70S ribosomes in vitro. Probably functions indirectly by altering the affinity of the ribosome for aminoacyl-tRNA, thus increasing their reactivity as acceptors for peptidyl transferase. In Pseudomonas syringae pv. tomato (strain ATCC BAA-871 / DC3000), this protein is Elongation factor P.